The following is a 315-amino-acid chain: L-lactate dehydrogenase (315 aa).

NAD(+) is bound by residues valine 16, aspartate 37, and 81–82; that span reads GA. Substrate-binding positions include glutamine 84, arginine 90, and 122–125; that span reads NPVD. Residues 120–122 and serine 145 each bind NAD(+); that span reads VSN. 150 to 153 lines the substrate pocket; that stretch reads DTAR. 2 residues coordinate beta-D-fructose 1,6-bisphosphate: arginine 155 and histidine 170. The active-site Proton acceptor is the histidine 177. Tyrosine 224 is subject to Phosphotyrosine. Residue threonine 233 coordinates substrate.

This sequence belongs to the LDH/MDH superfamily. LDH family. Homotetramer.

It is found in the cytoplasm. The enzyme catalyses (S)-lactate + NAD(+) = pyruvate + NADH + H(+). Its pathway is fermentation; pyruvate fermentation to lactate; (S)-lactate from pyruvate: step 1/1. With respect to regulation, allosterically activated by fructose 1,6-bisphosphate (FBP). Its function is as follows. Catalyzes the conversion of lactate to pyruvate. The chain is L-lactate dehydrogenase from Treponema denticola (strain ATCC 35405 / DSM 14222 / CIP 103919 / JCM 8153 / KCTC 15104).